We begin with the raw amino-acid sequence, 569 residues long: Urease subunit alpha (569 aa).

The Urease domain occupies 131-569 (GSIDTHIHFI…VPMAQKYFLL (439 aa)). Residues histidine 136, histidine 138, and lysine 219 each contribute to the Ni(2+) site. Lysine 219 is modified (N6-carboxylysine). Histidine 221 is a substrate binding site. The Ni(2+) site is built by histidine 248 and histidine 274. The Proton donor role is filled by histidine 322. Ni(2+) is bound at residue aspartate 362.

The protein belongs to the metallo-dependent hydrolases superfamily. Urease alpha subunit family. As to quaternary structure, heterotrimer of UreA (gamma), UreB (beta) and UreC (alpha) subunits. Two heterotrimers associate to form the active enzyme. In most bacteria it is thought that three heterotrimers form the active enzyme. Ni cation is required as a cofactor. In terms of processing, carboxylation allows a single lysine to coordinate two nickel ions.

The protein resides in the cytoplasm. It catalyses the reaction urea + 2 H2O + H(+) = hydrogencarbonate + 2 NH4(+). It participates in nitrogen metabolism; urea degradation; CO(2) and NH(3) from urea (urease route): step 1/1. With respect to regulation, inhibited by HgCl2 and acetohydroxyamic acid slightly by EDTA, but not by boric acid or L-methionine-DL-sulfoximine. The chain is Urease subunit alpha from Prochlorococcus marinus subsp. pastoris (strain PCC 9511).